A 380-amino-acid polypeptide reads, in one-letter code: Pectinesterase QRT1 (380 aa).

The signal sequence occupies residues 1 to 26 (MKVEAFIPAVLLLCFGVMLCLKSSCA). N-linked (GlcNAc...) asparagine glycans are attached at residues Asn74 and Asn137. Positions 164 and 198 each coordinate substrate. Asp221 (proton donor) is an active-site residue. An N-linked (GlcNAc...) asparagine glycan is attached at Asn227. A disulfide bridge links Cys235 with Cys255. Residue Asp242 is the Nucleophile of the active site. Substrate-binding residues include Arg298 and Trp300. Asn302 is a glycosylation site (N-linked (GlcNAc...) asparagine).

This sequence belongs to the pectinesterase family. Expressed in flower buds, siliques, developing guard cells, floral nectares, at the stigmatic surface, in the hypocotyl-root transition zone and the area of lateral root emergence. Not expressed in mature leaves.

It localises to the secreted. It is found in the cell wall. It catalyses the reaction [(1-&gt;4)-alpha-D-galacturonosyl methyl ester](n) + n H2O = [(1-&gt;4)-alpha-D-galacturonosyl](n) + n methanol + n H(+). Its pathway is glycan metabolism; pectin degradation; 2-dehydro-3-deoxy-D-gluconate from pectin: step 1/5. Functionally, pectinesterase required for cell type-specific pectin degradation to separate microspores. This Arabidopsis thaliana (Mouse-ear cress) protein is Pectinesterase QRT1.